The primary structure comprises 284 residues: MVLMIVSGRSGSGKSVALRALEDMGFYCVDNLPVVLLPDLARTLADRQISAAVSIDVRNMPESPEIFEQAMNNLPGAFSPQLLFLDADRNTLIRRYSDTRRLHPLSSKNLSLESAIDKESDLLEPLRSRADLIVDTSEMSVHELAEMLRTRLLGKRERELTMVFESFGFKHGIPIDADYVFDVRFLPNPHWDPKLRPMTGLDKPVAAFLDRHTEVHNFIYQTRSYLELWLPMLETNNRSYLTVAIGCTGGKHRSVYIAEQLADYFRSRGKNVQSRHRTLEKRKT.

8-15 provides a ligand contact to ATP; sequence GRSGSGKS. GTP is bound at residue 56–59; it reads DVRN. The interval 266–284 is RNA-binding; it reads RSRGKNVQSRHRTLEKRKT.

The protein belongs to the RapZ-like family. RapZ subfamily. As to quaternary structure, homotrimer.

Functionally, modulates the synthesis of GlmS, by affecting the processing and stability of the regulatory small RNA GlmZ. When glucosamine-6-phosphate (GlcN6P) concentrations are high in the cell, RapZ binds GlmZ and targets it to cleavage by RNase E. Consequently, GlmZ is inactivated and unable to activate GlmS synthesis. Under low GlcN6P concentrations, RapZ is sequestered and inactivated by an other regulatory small RNA, GlmY, preventing GlmZ degradation and leading to synthesis of GlmS. This Salmonella typhimurium (strain LT2 / SGSC1412 / ATCC 700720) protein is RNase adapter protein RapZ.